The primary structure comprises 986 residues: Vacuolar membrane protease (986 aa).

Topologically, residues 1-20 are cytoplasmic; it reads MATPRAQKFNPIAFTPGPVT. Residues 21-41 form a helical membrane-spanning segment; that stretch reads LITTIVYLALLIPILVISLVV. Topologically, residues 42 to 392 are vacuolar; that stretch reads PPAPETSPEG…AFAVFRLHTL (351 aa). N-linked (GlcNAc...) asparagine glycosylation is found at Asn-53, Asn-116, and Asn-119. Zn(2+) is bound by residues His-175 and Asp-187. Residue Glu-221 is the Proton acceptor of the active site. Glu-222 contributes to the Zn(2+) binding site. N-linked (GlcNAc...) asparagine glycosylation is present at Asn-238. 2 residues coordinate Zn(2+): Glu-247 and His-320. A helical membrane pass occupies residues 393 to 413; that stretch reads FALSVTLLIVAPLVIFITAIV. The Cytoplasmic segment spans residues 414–447; the sequence is LSKTDRMYLFSMSKSLGGTDERVSLRGLRGLFRT. Residues 448 to 468 form a helical membrane-spanning segment; it reads PIILAVATVIPIGLAYLLEKV. Topologically, residues 469-477 are vacuolar; sequence NPYIVHSSQ. A helical membrane pass occupies residues 478-498; that stretch reads FSVWSMMISVWIFLAWFLACA. Topologically, residues 499 to 509 are cytoplasmic; the sequence is ADFFRPSALHR. A helical transmembrane segment spans residues 510–530; that stretch reads AYSYTWIFIATWVMLVINTVY. The Vacuolar segment spans residues 531–534; the sequence is ANQK. Residues 535 to 555 form a helical membrane-spanning segment; the sequence is GIAAGYFVFFYFSGSFLATWV. At 556–665 the chain is on the cytoplasmic side; it reads SYLELFALPR…WSWTLPRWTW (110 aa). The segment at 595–620 is disordered; that stretch reads ELPSDTGPHAEYPGDADETDPTESTS. The helical transmembrane segment at 666–686 threads the bilayer; sequence VLQLLLLAPIVLILVGQLALF. Topologically, residues 687–702 are vacuolar; sequence LTTSMSQVGSDGVSTF. Residues 703–723 form a helical membrane-spanning segment; sequence IVYLACAVFTTLLFAPLFPFI. At 724-729 the chain is on the cytoplasmic side; the sequence is HRFTYH. A helical membrane pass occupies residues 730 to 750; the sequence is IPTFLFLVFVGTLIYNLVAFP. Residues 751–986 are Vacuolar-facing; sequence FSPANRLKMF…VEASHGITIQ (236 aa). N-linked (GlcNAc...) asparagine glycans are attached at residues Asn-797, Asn-840, and Asn-948.

Belongs to the peptidase M28 family. Zn(2+) serves as cofactor.

It localises to the vacuole membrane. Functionally, may be involved in vacuolar sorting and osmoregulation. The polypeptide is Vacuolar membrane protease (Blastomyces gilchristii (strain SLH14081) (Blastomyces dermatitidis)).